The chain runs to 524 residues: Lysophospholipid acyltransferase LPCAT4 (524 aa).

A run of 2 helical transmembrane segments spans residues 40–62 and 87–107; these read CLLG…FLLW and TVCH…LGFL. The HXXXXD motif motif lies at 129–134; that stretch reads HSTFFD. N152 carries an N-linked (GlcNAc...) asparagine glycan. The tract at residues 489 to 524 is disordered; sequence PPHTSRGTSQTPNASSPGNPTALANGTVQAPKQKGD. Positions 493–518 are enriched in polar residues; it reads SRGTSQTPNASSPGNPTALANGTVQA.

It belongs to the 1-acyl-sn-glycerol-3-phosphate acyltransferase family. As to expression, widely expressed with predominant level in brain.

The protein resides in the endoplasmic reticulum membrane. The enzyme catalyses a 1-acyl-sn-glycero-3-phosphoethanolamine + an acyl-CoA = a 1,2-diacyl-sn-glycero-3-phosphoethanolamine + CoA. It carries out the reaction a 1-O-(1Z-alkenyl)-sn-glycero-3-phosphoethanolamine + an acyl-CoA = a 1-O-(1Z-alkenyl)-2-acyl-sn-glycero-3-phosphoethanolamine + CoA. The catalysed reaction is a 1-acyl-sn-glycero-3-phosphocholine + an acyl-CoA = a 1,2-diacyl-sn-glycero-3-phosphocholine + CoA. It catalyses the reaction a 1-O-alkyl-sn-glycero-3-phosphocholine + acetyl-CoA = a 1-O-alkyl-2-acetyl-sn-glycero-3-phosphocholine + CoA. The enzyme catalyses a 1-acyl-sn-glycero-3-phospho-L-serine + an acyl-CoA = a 1,2-diacyl-sn-glycero-3-phospho-L-serine + CoA. It carries out the reaction octanoyl-CoA + a 1-acyl-sn-glycero-3-phosphoethanolamine = 1-acyl-2-octanoyl-sn-glycero-3-phosphoethanolamine + CoA. The catalysed reaction is a 1-acyl-sn-glycero-3-phosphoethanolamine + hexadecanoyl-CoA = 1-acyl-2-hexadecanoyl-sn-glycero-3-phosphoethanolamine + CoA. It catalyses the reaction a 1-acyl-sn-glycero-3-phosphoethanolamine + octadecanoyl-CoA = 1-acyl-2-octadecanoyl-sn-glycero-3-phosphoethanolamine + CoA. The enzyme catalyses a 1-acyl-sn-glycero-3-phosphoethanolamine + (9Z)-octadecenoyl-CoA = 1-acyl-2-(9Z)-octadecenoyl-sn-glycero-3-phosphoethanolamine + CoA. It carries out the reaction a 1-acyl-sn-glycero-3-phosphoethanolamine + (5Z,8Z,11Z,14Z)-eicosatetraenoyl-CoA = 1-acyl-2-(5Z,8Z,11Z,14Z)-eicosatetraenoyl-sn-glycero-3-phosphoethanolamine + CoA. The catalysed reaction is a 1-O-(1Z-alkenyl)-sn-glycero-3-phosphoethanolamine + octanoyl-CoA = 1-O-(1Z)-alkenyl-2-octanoyl-sn-glycero-3-phosphoethanolamine + CoA. It catalyses the reaction a 1-O-(1Z-alkenyl)-sn-glycero-3-phosphoethanolamine + hexadecanoyl-CoA = 1-O-(1Z)-alkenyl-2-hexadecanoyl-sn-glycero-3-phosphoethanolamine + CoA. The enzyme catalyses a 1-O-(1Z-alkenyl)-sn-glycero-3-phosphoethanolamine + octadecanoyl-CoA = 1-O-(1Z)-alkenyl-2-octadecanoyl-sn-glycero-3-phosphoethanolamine + CoA. It carries out the reaction a 1-O-(1Z-alkenyl)-sn-glycero-3-phosphoethanolamine + (9Z)-octadecenoyl-CoA = 1-O-(1Z)-alkenyl-2-(9Z)-octadecenoyl-sn-glycero-3-phosphoethanolamine + CoA. The catalysed reaction is a 1-O-(1Z-alkenyl)-sn-glycero-3-phosphoethanolamine + (5Z,8Z,11Z,14Z)-eicosatetraenoyl-CoA = 1-O-(1Z)-alkenyl-2-(5Z,8Z,11Z,14Z)-eicosatetraenoyl-sn-glycero-3-phosphoethanolamine + CoA. It catalyses the reaction a 1-acyl-sn-glycero-3-phosphocholine + hexadecanoyl-CoA = 1-acyl-2-hexadecanoyl-sn-glycero-3-phosphocholine + CoA. The enzyme catalyses a 1-acyl-sn-glycero-3-phosphocholine + (9Z)-octadecenoyl-CoA = a 1-acyl-2-(9Z)-octadecenoyl-sn-glycero-3-phosphocholine + CoA. It carries out the reaction 1-O-hexadecyl-sn-glycero-3-phosphocholine + (9Z)-octadecenoyl-CoA = 1-O-hexadecyl-2-(9Z)-octadecenoyl-sn-glycero-3-phosphocholine + CoA. The catalysed reaction is 1-O-hexadecyl-sn-glycero-3-phosphocholine + (5Z,8Z,11Z,14Z)-eicosatetraenoyl-CoA = 1-O-hexadecyl-2-(5Z,8Z,11Z,14Z)-eicosatetraenoyl-sn-glycero-3-phosphocholine + CoA. It catalyses the reaction 1-hexadecanoyl-sn-glycero-3-phospho-L-serine + (9Z)-octadecenoyl-CoA = 1-hexadecanoyl-2-(9Z-octadecenoyl)-sn-glycero-3-phospho-L-serine + CoA. The enzyme catalyses 1-octadecanoyl-sn-glycero-3-phospho-(1'-sn-glycerol) + (9Z)-octadecenoyl-CoA = 1-octadecanoyl-2-(9Z-octadecenoyl)-sn-glycero-3-phospho-(1'-sn-glycerol) + CoA. It carries out the reaction 1-octadecanoyl-sn-glycero-3-phospho-(1'-sn-glycerol) + (5Z,8Z,11Z,14Z)-eicosatetraenoyl-CoA = 1-octadecanoyl-2-(5Z,8Z,11Z,14Z-eicosatetraenoyl)-sn-glycero-3-phospho-(1'-sn-glycerol) + CoA. The protein operates within lipid metabolism; phospholipid metabolism. In terms of biological role, displays acyl-CoA-dependent lysophospholipid acyltransferase activity with a subset of lysophospholipids as substrates; converts lysophosphatidylethanolamine to phosphatidylethanolamine, lysophosphatidylcholine to phosphatidycholine, 1-alkenyl-lysophatidylethanolamine to 1-alkenyl-phosphatidylethanolamine, lysophosphatidylglycerol and alkyl-lysophosphatidylcholine to phosphatidylglycerol and alkyl-phosphatidylcholine, respectively. In contrast, has no lysophosphatidylinositol, glycerol-3-phosphate, diacylglycerol or lysophosphatidic acid acyltransferase activity. Prefers long chain acyl-CoAs (C16, C18) as acyl donors. In Homo sapiens (Human), this protein is Lysophospholipid acyltransferase LPCAT4 (LPCAT4).